Reading from the N-terminus, the 671-residue chain is UvrABC system protein B (671 aa).

A Helicase ATP-binding domain is found at 35–423; the sequence is KAIIENKKHQ…NHQVVQQIIR (389 aa). 48 to 55 provides a ligand contact to ATP; that stretch reads GATGTGKT. The Beta-hairpin motif lies at 101–124; that stretch reads NFDFFQPEAYIPSKDLYIDKDSRQ. The Helicase C-terminal domain occupies 440 to 602; the sequence is QIDDIINEIH…IVPKTISKAI (163 aa). The region spanning 632-667 is the UVR domain; it reads QQTIDNLRQEMLQAAKELDFERAAILRDTIIELENE.

The protein belongs to the UvrB family. Forms a heterotetramer with UvrA during the search for lesions. Interacts with UvrC in an incision complex.

Its subcellular location is the cytoplasm. In terms of biological role, the UvrABC repair system catalyzes the recognition and processing of DNA lesions. A damage recognition complex composed of 2 UvrA and 2 UvrB subunits scans DNA for abnormalities. Upon binding of the UvrA(2)B(2) complex to a putative damaged site, the DNA wraps around one UvrB monomer. DNA wrap is dependent on ATP binding by UvrB and probably causes local melting of the DNA helix, facilitating insertion of UvrB beta-hairpin between the DNA strands. Then UvrB probes one DNA strand for the presence of a lesion. If a lesion is found the UvrA subunits dissociate and the UvrB-DNA preincision complex is formed. This complex is subsequently bound by UvrC and the second UvrB is released. If no lesion is found, the DNA wraps around the other UvrB subunit that will check the other stand for damage. The polypeptide is UvrABC system protein B (Mycoplasma mycoides subsp. mycoides SC (strain CCUG 32753 / NCTC 10114 / PG1)).